A 212-amino-acid polypeptide reads, in one-letter code: Peptide methionine sulfoxide reductase MsrA (212 aa).

Polar residues predominate over residues 1–14 (MNSIDKTQRITQSD). Positions 1-21 (MNSIDKTQRITQSDALPGRST) are disordered. The active site involves Cys-52.

Belongs to the MsrA Met sulfoxide reductase family.

The enzyme catalyses L-methionyl-[protein] + [thioredoxin]-disulfide + H2O = L-methionyl-(S)-S-oxide-[protein] + [thioredoxin]-dithiol. It catalyses the reaction [thioredoxin]-disulfide + L-methionine + H2O = L-methionine (S)-S-oxide + [thioredoxin]-dithiol. In terms of biological role, has an important function as a repair enzyme for proteins that have been inactivated by oxidation. Catalyzes the reversible oxidation-reduction of methionine sulfoxide in proteins to methionine. The polypeptide is Peptide methionine sulfoxide reductase MsrA (Pectobacterium atrosepticum (strain SCRI 1043 / ATCC BAA-672) (Erwinia carotovora subsp. atroseptica)).